A 120-amino-acid polypeptide reads, in one-letter code: Large ribosomal subunit protein uL14 (120 aa).

This sequence belongs to the universal ribosomal protein uL14 family. In terms of assembly, part of the 50S ribosomal subunit. Forms a cluster with proteins L3 and L19. In the 70S ribosome, L14 and L19 interact and together make contacts with the 16S rRNA in bridges B5 and B8.

Binds to 23S rRNA. Forms part of two intersubunit bridges in the 70S ribosome. In Karelsulcia muelleri (strain GWSS) (Sulcia muelleri), this protein is Large ribosomal subunit protein uL14.